We begin with the raw amino-acid sequence, 652 residues long: MAGVGFAAHRLELLASYQDVIGEDSPTDWALYTYEDGSDDLKLAASGGGGLLELSGHFEIQKVMYGFCSVKEPQAVLPKYVLVNWVGEDVPDARKCACASHVAKIAEFFQGVDVIVNASSVEDIDPGAIGQRLSNGLARVSSPVLHRLRLREDENAEPVGTTYQKTDATVEMKRLNREQFWEQAKKEEELRKEEERKKALDARLRFEQERMEQERLEQEERERRYREREEQIEEHRRKQQSMEAEEARQRLKEQSIFGEQQEEDDRQQLRKSESEVEEAAAIIAQRPDNPREFFKQQERVASGSGDAISPGSHRTGRLHCPFIKTADSGPPSSSSSSSSPPRTPFPYITCHRTPNLSSFFPCSQSDYRKVSAAGCSPCESSPASTPLGEQRTRAPAEETPATPKDSPSPSTQVAEPAATEQHWPFPGPEDKAAEPPGDEPDPDPRPAWTAGADVLGDLVTLEPSEPSPAPAASEPQPVETPGVAEPLIELWQSDGAAPAATSTWPLPDTPAGPPVPPEEGTLLGLDELPEPPATFCDAEQHEEVEEEEEEEEATAGEPHPTGLGYQEGYQEGPEVPPITNGEMGPKDGTAGRGEQASEGYFSQSQEEEAPPPEEPSAKAPQPVFYNKPPEIDITCWDTDPLPEEEESFGGGL.

Residue A2 is modified to N-acetylalanine. Residues 5–134 (GFAAHRLELL…DPGAIGQRLS (130 aa)) enclose the ADF-H domain. Composition is skewed to basic and acidic residues over residues 211–236 (MEQE…EEHR) and 288–298 (DNPREFFKQQE). Disordered regions lie at residues 211–350 (MEQE…YITC) and 371–652 (SAAG…GGGL). The segment covering 328-340 (SGPPSSSSSSSSP) has biased composition (low complexity). Residues 507-517 (PDTPAGPPVPP) show a composition bias toward pro residues. Acidic residues-rich tracts occupy residues 540-554 (QHEE…EEAT) and 640-652 (PLPE…GGGL).

Brain neurons.

The protein resides in the cytoplasm. It is found in the cell projection. It localises to the dendrite. Its subcellular location is the cell cortex. The protein localises to the cell junction. The protein resides in the growth cone. In terms of biological role, actin cytoskeleton-organizing protein that plays a role in the formation of cell projections. Plays a role in dendritic spine morphogenesis and organization, including the localization of the dopamine receptor DRD1 to the dendritic spines. Involved in synaptic plasticity. This Gallus gallus (Chicken) protein is Drebrin (DBN1).